A 213-amino-acid polypeptide reads, in one-letter code: Redox-sensing transcriptional repressor Rex (213 aa).

The segment at residues 18-57 is a DNA-binding region (H-T-H motif); the sequence is LYYRFVNTLKSKGIDRVNSKAISEGLNIDSATIRRDFSYF. 92-97 is an NAD(+) binding site; the sequence is GVGNLG.

This sequence belongs to the transcriptional regulatory Rex family. As to quaternary structure, homodimer.

The protein localises to the cytoplasm. In terms of biological role, modulates transcription in response to changes in cellular NADH/NAD(+) redox state. In Staphylococcus saprophyticus subsp. saprophyticus (strain ATCC 15305 / DSM 20229 / NCIMB 8711 / NCTC 7292 / S-41), this protein is Redox-sensing transcriptional repressor Rex.